The chain runs to 481 residues: Exodeoxyribonuclease I (481 aa).

Residues 12–193 form the Exonuclease domain; the sequence is LFYDYETFGK…SSDVYATMNI (182 aa). Aspartate 15, glutamate 17, and aspartate 186 together coordinate Mg(2+). Glutamate 17 lines the substrate pocket. One can recognise an ExoI SH3-like domain in the interval 202–350; that stretch reads PKLFNFFFKY…KLKKFLCSIA (149 aa). The region spanning 356-471 is the ExoI C-terminal domain; that stretch reads NGSNVDLKMY…ELFEYVKYTR (116 aa).

Monomer. Interacts with ssb (via C-terminus); this interaction stimulates the exonuclease activity by recruiting the enzyme to its substrate. Mg(2+) serves as cofactor.

The catalysed reaction is Exonucleolytic cleavage in the 3'- to 5'-direction to yield nucleoside 5'-phosphates.. Degrades single-stranded DNA (ssDNA) in a highly processive manner. Also functions as a DNA deoxyribophosphodiesterase that releases deoxyribose-phosphate moieties following the cleavage of DNA at an apurinic/apyrimidinic (AP) site by either an AP endonuclease or AP lyase. The chain is Exodeoxyribonuclease I (sbcB) from Buchnera aphidicola subsp. Baizongia pistaciae (strain Bp).